The primary structure comprises 213 residues: Uridine kinase (213 aa).

Position 15 to 22 (15 to 22) interacts with ATP; it reads GASASGKS.

It belongs to the uridine kinase family.

The protein resides in the cytoplasm. The enzyme catalyses uridine + ATP = UMP + ADP + H(+). The catalysed reaction is cytidine + ATP = CMP + ADP + H(+). It participates in pyrimidine metabolism; CTP biosynthesis via salvage pathway; CTP from cytidine: step 1/3. It functions in the pathway pyrimidine metabolism; UMP biosynthesis via salvage pathway; UMP from uridine: step 1/1. The chain is Uridine kinase from Proteus mirabilis (strain HI4320).